The primary structure comprises 182 residues: Early nodulin-like protein 14 (182 aa).

The first 28 residues, 1-28 (MFLSASMASSSLHVAIFSLIFLFSLAAA), serve as a signal peptide directing secretion. The 105-residue stretch at 29 to 133 (NEVTVGGKSG…GQKLSLVVIS (105 aa)) folds into the Phytocyanin domain. Cys87 and Cys121 are oxidised to a cystine. N-linked (GlcNAc...) asparagine glycosylation is found at Asn88 and Asn95. Residue Ser160 is the site of GPI-anchor amidated serine attachment. Residues 161-182 (GSVRLGGCYVVLGLVLGLCAWF) constitute a propeptide, removed in mature form.

The protein belongs to the early nodulin-like (ENODL) family. As to quaternary structure, interacts strongly and specifically with the extracellular domain of FERONIA at the synergid cell surface. In terms of tissue distribution, mostly expressed in seedlings and flowers, and, to a lower extent, in roots, stems and seeds, but barely in leaves.

The protein resides in the cell membrane. Its function is as follows. May act as a carbohydrate transporter. Required, together with ENODL11, ENODL12, ENODL13, ENODL14 and ENODL15, for male-female communication and pollen tube reception and burst at the synergid cell surface of the female gametophyte. This Arabidopsis thaliana (Mouse-ear cress) protein is Early nodulin-like protein 14.